Consider the following 309-residue polypeptide: NADH-cytochrome b5 reductase 1 (309 aa).

A helical transmembrane segment spans residues 31–51 (DWVVYSVALALALGTWKFFQL). The FAD-binding FR-type domain maps to 60–168 (TKFQEFELKE…RGPKGAFVYQ (109 aa)). FAD is bound by residues 148–163 (AGLS…GPKG) and 174–208 (HFGM…QVDL).

The protein belongs to the flavoprotein pyridine nucleotide cytochrome reductase family. Monomer. Component of the 2-(3-amino-3-carboxypropyl)histidine synthase complex composed of DPH1, DPH2, DPH3 and a NADH-dependent reductase, predominantly CBR1. FAD is required as a cofactor.

Its subcellular location is the mitochondrion outer membrane. The catalysed reaction is 2 Fe(III)-[cytochrome b5] + NADH = 2 Fe(II)-[cytochrome b5] + NAD(+) + H(+). It carries out the reaction 2 Fe(3+)-[Dph3] + NADH = 2 Fe(2+)-[Dph3] + NAD(+) + H(+). The protein operates within protein modification; peptidyl-diphthamide biosynthesis. Functionally, NADH-dependent reductase for DPH3 and cytochrome b5. Required for the first step of diphthamide biosynthesis, a post-translational modification of histidine which occurs in elongation factor 2. DPH1 and DPH2 transfer a 3-amino-3-carboxypropyl (ACP) group from S-adenosyl-L-methionine (SAM) to a histidine residue, the reaction is assisted by a reduction system comprising DPH3 and a NADH-dependent reductase, predominantly CBR1. By reducing DPH3, also involved in the formation of the tRNA wobble base modification mcm5s 2U (5-methoxycarbonylmethyl-2-thiouridine), mediated by the elongator complex. The cytochrome b5/NADH cytochrome b5 reductase electron transfer system supports the catalytic activity of several sterol biosynthetic enzymes. The protein is NADH-cytochrome b5 reductase 1 (CBR1) of Pyricularia oryzae (strain 70-15 / ATCC MYA-4617 / FGSC 8958) (Rice blast fungus).